Consider the following 394-residue polypeptide: S-adenosylmethionine synthase 2 (394 aa).

Glutamate 11 contributes to the Mg(2+) binding site. Histidine 17 provides a ligand contact to ATP. Glutamate 45 lines the K(+) pocket. L-methionine-binding residues include glutamate 58 and glutamine 101. Residues 169-171, 237-240, aspartate 248, 254-255, alanine 271, lysine 275, and lysine 279 each bind ATP; these read DGK, SGRF, and RK. Aspartate 248 contacts L-methionine. Residue lysine 279 coordinates L-methionine.

This sequence belongs to the AdoMet synthase family. As to quaternary structure, homotetramer. Mn(2+) serves as cofactor. The cofactor is Mg(2+). Requires Co(2+) as cofactor. K(+) is required as a cofactor.

The protein resides in the cytoplasm. The enzyme catalyses L-methionine + ATP + H2O = S-adenosyl-L-methionine + phosphate + diphosphate. It functions in the pathway amino-acid biosynthesis; S-adenosyl-L-methionine biosynthesis; S-adenosyl-L-methionine from L-methionine: step 1/1. Its function is as follows. Catalyzes the formation of S-adenosylmethionine from methionine and ATP. The reaction comprises two steps that are both catalyzed by the same enzyme: formation of S-adenosylmethionine (AdoMet) and triphosphate, and subsequent hydrolysis of the triphosphate. In Oryza sativa subsp. japonica (Rice), this protein is S-adenosylmethionine synthase 2 (SAM2).